We begin with the raw amino-acid sequence, 159 residues long: Ribosomal RNA large subunit methyltransferase H (159 aa).

S-adenosyl-L-methionine-binding positions include Leu-76, Gly-108, and 127–132 (FGLLTF).

The protein belongs to the RNA methyltransferase RlmH family. In terms of assembly, homodimer.

It localises to the cytoplasm. The catalysed reaction is pseudouridine(1915) in 23S rRNA + S-adenosyl-L-methionine = N(3)-methylpseudouridine(1915) in 23S rRNA + S-adenosyl-L-homocysteine + H(+). Functionally, specifically methylates the pseudouridine at position 1915 (m3Psi1915) in 23S rRNA. The protein is Ribosomal RNA large subunit methyltransferase H of Streptococcus thermophilus (strain ATCC BAA-491 / LMD-9).